The primary structure comprises 636 residues: Interleukin-27 receptor subunit alpha (636 aa).

The first 32 residues, 1–32 (MRGGRGAPFWLWPLPKLALLPLLWVLFQRTRP), serve as a signal peptide directing secretion. The Extracellular portion of the chain corresponds to 33–516 (QGSAGPLQCY…HLPDNTLRWK (484 aa)). 2 N-linked (GlcNAc...) asparagine glycosylation sites follow: asparagine 51 and asparagine 76. Positions 131–231 (PRLGPDVDFS…PILSFQTPPS (101 aa)) constitute a Fibronectin type-III 1 domain. The short motif at 217–221 (WGEWS) is the WSXWS motif element. Residues asparagine 302, asparagine 311, asparagine 374, asparagine 382, and asparagine 467 are each glycosylated (N-linked (GlcNAc...) asparagine). Fibronectin type-III domains follow at residues 322–417 (APRS…LAPL) and 419–511 (GPTL…LPDN). Residues 517–537 (VLPGILFLWGLFLLGCGLSLA) traverse the membrane as a helical segment. Over 538 to 636 (TSGRCYHLRH…LGPPRPQVLA (99 aa)) the chain is Cytoplasmic. The Box 1 motif motif lies at 554 to 562 (VWEKVPDPA). A disordered region spans residues 587 to 636 (EVEEMEPPPVMESSQPAQATAPLDSGYEKHFLPTPEELGLLGPPRPQVLA). Positions 618–628 (LPTPEELGLLG) are enriched in low complexity.

The protein belongs to the type I cytokine receptor family. Type 2 subfamily. In terms of assembly, component of a receptor complex composed of IL6ST/GP130, IL27RA/WSX1 and CNTFR which interacts with the neuroprotective peptide humanin. Highly expressed in lymphoid tissues such as spleen, lymph nodes and peripheral blood leukocytes. Weakly expressed in other tissues examined including heart, brain, fetal and adult lung, liver, skeletal muscle, kidney, pancreas, prostate, testis, ovary, small intestine, kidney and colon. In the lymphoid system, higher level expression in CD4+ T-cell subsets than in CD8+ T-cell subsets. Also weaker expression in CD19+ B-cells and monocytes.

The protein resides in the membrane. Functionally, receptor for IL27. Requires IL6ST/GP130 to mediate signal transduction in response to IL27. This signaling system acts through STAT3 and STAT1. Acts as a receptor for the neuroprotective peptide humanin as part of a complex with IL6ST/GP130 and CNTFR. Involved in the regulation of Th1-type immune responses. Also appears to be involved in innate defense mechanisms. The protein is Interleukin-27 receptor subunit alpha (IL27RA) of Homo sapiens (Human).